A 365-amino-acid polypeptide reads, in one-letter code: tRNA N6-adenosine threonylcarbamoyltransferase (365 aa).

Fe cation-binding residues include histidine 119 and histidine 123. Substrate contacts are provided by residues 141–145 (LVSGG), aspartate 174, glycine 187, and asparagine 289. Aspartate 317 provides a ligand contact to Fe cation. The interval 341-365 (SARPRWPLDKTSPALIGSGKKGAKA) is disordered.

It belongs to the KAE1 / TsaD family. The cofactor is Fe(2+).

Its subcellular location is the cytoplasm. The catalysed reaction is L-threonylcarbamoyladenylate + adenosine(37) in tRNA = N(6)-L-threonylcarbamoyladenosine(37) in tRNA + AMP + H(+). Its function is as follows. Required for the formation of a threonylcarbamoyl group on adenosine at position 37 (t(6)A37) in tRNAs that read codons beginning with adenine. Is involved in the transfer of the threonylcarbamoyl moiety of threonylcarbamoyl-AMP (TC-AMP) to the N6 group of A37, together with TsaE and TsaB. TsaD likely plays a direct catalytic role in this reaction. The chain is tRNA N6-adenosine threonylcarbamoyltransferase from Ruegeria sp. (strain TM1040) (Silicibacter sp.).